Reading from the N-terminus, the 368-residue chain is Histidinol-phosphate aminotransferase (368 aa).

Lys-228 is modified (N6-(pyridoxal phosphate)lysine).

The protein belongs to the class-II pyridoxal-phosphate-dependent aminotransferase family. Histidinol-phosphate aminotransferase subfamily. Pyridoxal 5'-phosphate serves as cofactor.

The enzyme catalyses L-histidinol phosphate + 2-oxoglutarate = 3-(imidazol-4-yl)-2-oxopropyl phosphate + L-glutamate. The protein operates within amino-acid biosynthesis; L-histidine biosynthesis; L-histidine from 5-phospho-alpha-D-ribose 1-diphosphate: step 7/9. This is Histidinol-phosphate aminotransferase from Methanosarcina mazei (strain ATCC BAA-159 / DSM 3647 / Goe1 / Go1 / JCM 11833 / OCM 88) (Methanosarcina frisia).